The sequence spans 372 residues: MRAIITGGGTGGHIYPALAIARGLQSRFSKVQILYVGTNRGLEADIVPKANFPFQAITVSGLQRKISLENFKVLWQAYRGYREAVGIIKTFNPDVVIGTGGYVCGPVVMAAARRGIPTLIHEQNAFPGITNRILSKFADQVTVTFEDSIRYFGNKDNITLTGLPVRPEILQAERQTALEMFKLKNDKLTLLVFGGSRGARKINQAMVETIKKYGNDERLQILHATGQAGYEEFMQELKDNGISLEHYGNIIIKPYIYNMHEALVAADMVVSRAGAATLAELTVLGLPSILIPYPYASENHQEHNARALAERGAAVLIKDSQLTGEKLIQAIKDMLQNKEKLKNMAKSSQKLGRPEALSDIIKCVEKILPRQQ.

Residues 10-12 (TGG), asparagine 124, arginine 166, serine 196, isoleucine 256, and glutamine 301 contribute to the UDP-N-acetyl-alpha-D-glucosamine site.

This sequence belongs to the glycosyltransferase 28 family. MurG subfamily.

The protein resides in the cell membrane. It catalyses the reaction di-trans,octa-cis-undecaprenyl diphospho-N-acetyl-alpha-D-muramoyl-L-alanyl-D-glutamyl-meso-2,6-diaminopimeloyl-D-alanyl-D-alanine + UDP-N-acetyl-alpha-D-glucosamine = di-trans,octa-cis-undecaprenyl diphospho-[N-acetyl-alpha-D-glucosaminyl-(1-&gt;4)]-N-acetyl-alpha-D-muramoyl-L-alanyl-D-glutamyl-meso-2,6-diaminopimeloyl-D-alanyl-D-alanine + UDP + H(+). Its pathway is cell wall biogenesis; peptidoglycan biosynthesis. Functionally, cell wall formation. Catalyzes the transfer of a GlcNAc subunit on undecaprenyl-pyrophosphoryl-MurNAc-pentapeptide (lipid intermediate I) to form undecaprenyl-pyrophosphoryl-MurNAc-(pentapeptide)GlcNAc (lipid intermediate II). This chain is UDP-N-acetylglucosamine--N-acetylmuramyl-(pentapeptide) pyrophosphoryl-undecaprenol N-acetylglucosamine transferase, found in Desulforamulus reducens (strain ATCC BAA-1160 / DSM 100696 / MI-1) (Desulfotomaculum reducens).